Consider the following 232-residue polypeptide: Small ribosomal subunit protein uS2 (232 aa).

This sequence belongs to the universal ribosomal protein uS2 family.

The sequence is that of Small ribosomal subunit protein uS2 from Pelotomaculum thermopropionicum (strain DSM 13744 / JCM 10971 / SI).